Reading from the N-terminus, the 896-residue chain is MRRGLVKDPDNADLFCKEDPERIFVDLHEIGHGSFGAVYFATNSTTNEIVAVKKMSYSGKQMNEKWQDIIKEVKFLQQLKHPNTIEYKGCYLKDHTAWLVMEYCLGSASDLLEVHKKPLQEVEIAAITHGALQGLAYLHSHNMIHRDIKAGNILLTEPGQVKLADFGSASKSSPANSFVGTPYWMAPEVILAMDEGQYDGKIDIWSLGITCIELAERKPPLFNMNAMSALYHIAQNESPTLQSNEWTDSFKGFVDYCLQKLPQERPASLELLRHDFVWRERPARVLIDLIQRTKDAVRELDNLQYRKMKKILFQESRNGPLNESQEDDEDSEHGTSLTRKMDSLGSNHSIPSTSVSTGSQSSSVNSIQEVMEDGSPDLIMSFSCSFDSTSSLVHKKDHAFIRDEADHRDPRPELRPTQSVQSQALHYRTRERFATIKSASLVTRQIHEHEQENELREQMSGYKRMRRQHQKQLIALENKLKAEMDEHRLKLQKEVETHANNASIELEKLSKRQFVGMDKEAKVAAADERRFQQQIIAQQKKDLTSFLESQKKQYKICKEKIKEELNEDHSTPKKEKQERISKHKENLQHTQAEEEAQLLSQQRLYYEKNCRLFKRKIMIKRHEVEQQHIREELNKKRTQKEMEHAMLIRQDESTRELEYRQLQMLQKLRMDLIRLQHQTELENQLEYNKRRERELHRKHVMELRQQPKNLKVMEMQIKKQFQDTCKVQTKQYKALKNHQLEVSPKCEHKTILKSLKDEQTRKLAILAEQYEQSINEMMASQALRLDEAQEAECQALRQQLQQEMELLNAYQSKIKMQTEAQHERELQKLEQRVSLRRAHLEQKIEEELVALQKERSERIKHLFERQEREIETFDMESLRMGFGNLVTLEYPKEDYR.

Residues 24–277 (FVDLHEIGHG…SLELLRHDFV (254 aa)) form the Protein kinase domain. ATP-binding positions include 30–38 (IGHGSFGAV) and lysine 53. Residue aspartate 147 is the Proton acceptor of the active site. Disordered regions lie at residues 316 to 366 (SRNG…SVNS) and 403 to 423 (DEAD…VQSQ). Residues 334–348 (GTSLTRKMDSLGSNH) are compositionally biased toward polar residues. The segment covering 349 to 366 (SIPSTSVSTGSQSSSVNS) has biased composition (low complexity). Basic and acidic residues predominate over residues 403-414 (DEADHRDPRPEL). Coiled coils occupy residues 450–513 (EQEN…SKRQ), 545–650 (SFLE…LIRQ), and 752–873 (LKSL…IETF). Over residues 565 to 587 (LNEDHSTPKKEKQERISKHKENL) the composition is skewed to basic and acidic residues. The interval 565 to 593 (LNEDHSTPKKEKQERISKHKENLQHTQAE) is disordered.

The protein belongs to the protein kinase superfamily. STE Ser/Thr protein kinase family. STE20 subfamily.

It localises to the cytoplasm. The protein resides in the cell membrane. The protein localises to the membrane raft. Its subcellular location is the lipid droplet. It carries out the reaction L-seryl-[protein] + ATP = O-phospho-L-seryl-[protein] + ADP + H(+). The enzyme catalyses L-threonyl-[protein] + ATP = O-phospho-L-threonyl-[protein] + ADP + H(+). Its function is as follows. Serine/threonine-protein kinase that acts as a regulator of the p38/MAPK14 stress-activated MAPK cascade and of the MAPK8/JNK cascade. In response to DNA damage, involved in the G2/M transition DNA damage checkpoint by activating the p38/MAPK14 stress-activated MAPK cascade, probably by mediating phosphorylation of upstream MAP kinase kinases. Inhibits basal activity of the MAPK8/JNK cascade. The protein is Serine/threonine-protein kinase TAO3 (taok3) of Xenopus laevis (African clawed frog).